The chain runs to 182 residues: Methionine-R-sulfoxide reductase B2, mitochondrial (182 aa).

The N-terminal 20 residues, 1-20 (MARLLWLLRGLTLGTAPRRA), are a transit peptide targeting the mitochondrion. Residues 51–180 (KSEWQKKLTP…NSVALKFKPR (130 aa)) enclose the MsrB domain. Zn(2+)-binding residues include Cys-90, Cys-93, Cys-146, and Cys-149. Cys-169 (nucleophile) is an active-site residue.

The protein belongs to the MsrB Met sulfoxide reductase family. As to quaternary structure, interacts with DAOA; the interaction is direct. Requires Zn(2+) as cofactor. Ubiquitous. Detected in retina, ocular ciliary body, skeletal muscle, heart, colon, bone marrow, cerebellum, small intestine, fetal brain, fetal liver, kidney, spinal cord, lung, placenta and prostate.

The protein resides in the mitochondrion. The catalysed reaction is L-methionyl-[protein] + [thioredoxin]-disulfide + H2O = L-methionyl-(R)-S-oxide-[protein] + [thioredoxin]-dithiol. It carries out the reaction [thioredoxin]-disulfide + L-methionine + H2O = L-methionine (R)-S-oxide + [thioredoxin]-dithiol. Methionine-sulfoxide reductase that specifically reduces methionine (R)-sulfoxide back to methionine. While in many cases, methionine oxidation is the result of random oxidation following oxidative stress, methionine oxidation is also a post-translational modification that takes place on specific residue. Upon oxidative stress, may play a role in the preservation of mitochondrial integrity by decreasing the intracellular reactive oxygen species build-up through its scavenging role, hence contributing to cell survival and protein maintenance. This Homo sapiens (Human) protein is Methionine-R-sulfoxide reductase B2, mitochondrial (MSRB2).